Reading from the N-terminus, the 764-residue chain is 5-methyltetrahydropteroyltriglutamate--homocysteine methyltransferase (764 aa).

5-methyltetrahydropteroyltri-L-glutamate contacts are provided by residues 16–19 (RELK) and Lys-121. L-homocysteine contacts are provided by residues 440-442 (IGS) and Glu-493. L-methionine contacts are provided by residues 440–442 (IGS) and Glu-493. Residues 524 to 525 (RC) and Trp-570 each bind 5-methyltetrahydropteroyltri-L-glutamate. L-homocysteine is bound at residue Asp-608. Asp-608 contacts L-methionine. Position 614 (Glu-614) interacts with 5-methyltetrahydropteroyltri-L-glutamate. His-650, Cys-652, and Glu-674 together coordinate Zn(2+). Catalysis depends on His-703, which acts as the Proton donor. Cys-735 provides a ligand contact to Zn(2+).

The protein belongs to the vitamin-B12 independent methionine synthase family. Zn(2+) serves as cofactor.

The enzyme catalyses 5-methyltetrahydropteroyltri-L-glutamate + L-homocysteine = tetrahydropteroyltri-L-glutamate + L-methionine. It participates in amino-acid biosynthesis; L-methionine biosynthesis via de novo pathway; L-methionine from L-homocysteine (MetE route): step 1/1. Catalyzes the transfer of a methyl group from 5-methyltetrahydrofolate to homocysteine resulting in methionine formation. This Burkholderia orbicola (strain MC0-3) protein is 5-methyltetrahydropteroyltriglutamate--homocysteine methyltransferase.